The following is a 159-amino-acid chain: Protein NrdI (159 aa).

Belongs to the NrdI family.

Its function is as follows. Probably involved in ribonucleotide reductase function. The protein is Protein NrdI of Rhodococcus erythropolis (strain PR4 / NBRC 100887).